We begin with the raw amino-acid sequence, 348 residues long: NADH-ubiquinone oxidoreductase chain 2 (348 aa).

10 helical membrane passes run 2–22, 26–46, 55–75, 96–116, 149–169, 178–198, 199–219, 242–262, 276–296, and 323–343; these read SPYVFLIISISLFLGTSLTLF, WLMAWMGLEINTLAIIPMMTY, AAIKYFLTQATASMLVMFAII, VLMTLALAMKLGLAPFHFWVP, LNMKVLITLAFLSTMLGGWGG, ILAYSSIAHMGWMTIVMMINP, SLALLNLLIYIIATLTLFLML, TAILLTLLSLGGLPPLTGFMP, IIMATLMALSALLNLFFYMRI, and INIIPTLTIISSLLLPLTPLL.

It belongs to the complex I subunit 2 family. As to quaternary structure, core subunit of respiratory chain NADH dehydrogenase (Complex I) which is composed of 45 different subunits. Interacts with TMEM242.

The protein resides in the mitochondrion inner membrane. The enzyme catalyses a ubiquinone + NADH + 5 H(+)(in) = a ubiquinol + NAD(+) + 4 H(+)(out). Core subunit of the mitochondrial membrane respiratory chain NADH dehydrogenase (Complex I) that is believed to belong to the minimal assembly required for catalysis. Complex I functions in the transfer of electrons from NADH to the respiratory chain. The immediate electron acceptor for the enzyme is believed to be ubiquinone. The protein is NADH-ubiquinone oxidoreductase chain 2 of Osphranter robustus (Wallaroo).